Here is a 619-residue protein sequence, read N- to C-terminus: Pentatricopeptide repeat-containing protein At1g68980, mitochondrial (619 aa).

The transit peptide at 1–100 (MLRKTLTLIS…RAFVSTTYVI (100 aa)) directs the protein to the mitochondrion. PPR repeat units lie at residues 186–221 (DLVA…GVKP), 222–256 (DELS…GFAS), 257–292 (RRIL…GEAS), 295–329 (SEET…ESMS), 366–400 (GIGV…GLQL), 401–435 (DVET…RVAD), 436–466 (LKRC…VMED), 472–506 (KSHD…QYEP), 507–541 (NNQT…KAKL), and 542–576 (EHAL…KIFV).

Belongs to the PPR family. P subfamily.

Its subcellular location is the mitochondrion. This chain is Pentatricopeptide repeat-containing protein At1g68980, mitochondrial, found in Arabidopsis thaliana (Mouse-ear cress).